A 482-amino-acid polypeptide reads, in one-letter code: NADH-quinone oxidoreductase subunit N (482 aa).

14 consecutive transmembrane segments (helical) span residues 11–31, 37–57, 77–97, 106–126, 131–151, 166–186, 208–228, 255–275, 279–299, 304–324, 332–352, 376–396, 404–424, and 462–482; these read AVPE…GVFI, IPYY…WYIF, RFSV…FIYA, IPHT…VALV, LLTV…MVAL, FVIG…IFGA, LILV…LGTA, IAAY…LHVQ, MLIV…IVQS, MLAY…LCGT, MFYT…VVLM, AFMM…VGFI, ALIQ…AIVG, and LAVL…HLAF.

It belongs to the complex I subunit 2 family. As to quaternary structure, NDH-1 is composed of 14 different subunits. Subunits NuoA, H, J, K, L, M, N constitute the membrane sector of the complex.

Its subcellular location is the cell inner membrane. It carries out the reaction a quinone + NADH + 5 H(+)(in) = a quinol + NAD(+) + 4 H(+)(out). NDH-1 shuttles electrons from NADH, via FMN and iron-sulfur (Fe-S) centers, to quinones in the respiratory chain. The immediate electron acceptor for the enzyme in this species is believed to be ubiquinone. Couples the redox reaction to proton translocation (for every two electrons transferred, four hydrogen ions are translocated across the cytoplasmic membrane), and thus conserves the redox energy in a proton gradient. In Coxiella burnetii (strain RSA 493 / Nine Mile phase I), this protein is NADH-quinone oxidoreductase subunit N.